Here is a 565-residue protein sequence, read N- to C-terminus: NAD-dependent malic enzyme (565 aa).

The active-site Proton donor is the Tyr-104. Arg-157 contributes to the NAD(+) binding site. Lys-175 serves as the catalytic Proton acceptor. Positions 246, 247, and 270 each coordinate a divalent metal cation. 2 residues coordinate NAD(+): Asp-270 and Asn-418.

Belongs to the malic enzymes family. In terms of assembly, homotetramer. Requires Mg(2+) as cofactor. The cofactor is Mn(2+).

It carries out the reaction (S)-malate + NAD(+) = pyruvate + CO2 + NADH. The catalysed reaction is oxaloacetate + H(+) = pyruvate + CO2. This chain is NAD-dependent malic enzyme, found in Salmonella choleraesuis (strain SC-B67).